The primary structure comprises 110 residues: NADH-quinone oxidoreductase subunit K (110 aa).

3 helical membrane-spanning segments follow: residues 13–33 (VTHG…GIII), 38–58 (ILIL…NFLI), and 70–90 (VFVF…LAIV).

This sequence belongs to the complex I subunit 4L family. In terms of assembly, NDH-1 is composed of 14 different subunits. Subunits NuoA, H, J, K, L, M, N constitute the membrane sector of the complex.

It localises to the cell inner membrane. It catalyses the reaction a quinone + NADH + 5 H(+)(in) = a quinol + NAD(+) + 4 H(+)(out). In terms of biological role, NDH-1 shuttles electrons from NADH, via FMN and iron-sulfur (Fe-S) centers, to quinones in the respiratory chain. The immediate electron acceptor for the enzyme in this species is believed to be ubiquinone. Couples the redox reaction to proton translocation (for every two electrons transferred, four hydrogen ions are translocated across the cytoplasmic membrane), and thus conserves the redox energy in a proton gradient. This Francisella tularensis subsp. tularensis (strain FSC 198) protein is NADH-quinone oxidoreductase subunit K.